The following is a 563-amino-acid chain: Inositol-3-phosphate synthase 1-B (563 aa).

The protein belongs to the myo-inositol 1-phosphate synthase family. NAD(+) serves as cofactor.

Its subcellular location is the cytoplasm. The catalysed reaction is D-glucose 6-phosphate = 1D-myo-inositol 3-phosphate. It participates in polyol metabolism; myo-inositol biosynthesis; myo-inositol from D-glucose 6-phosphate: step 1/2. Key enzyme in myo-inositol biosynthesis pathway that catalyzes the conversion of glucose 6-phosphate to 1-myo-inositol 1-phosphate in a NAD-dependent manner. Rate-limiting enzyme in the synthesis of all inositol-containing compounds. This Xenopus laevis (African clawed frog) protein is Inositol-3-phosphate synthase 1-B (isyna1-b).